The sequence spans 279 residues: tRNA (carboxymethyluridine(34)-5-O)-methyltransferase (279 aa).

Residues 172–236 form a disordered region; the sequence is KSKSKPKTKS…QQQDQEQERE (65 aa). Positions 200-229 are enriched in basic and acidic residues; it reads PKERSEYLQRWKEEQQRSKSLDDNDEKQQQ.

As to quaternary structure, interacts with TRM112.

The protein resides in the cytoplasm. The protein localises to the nucleus. The catalysed reaction is 5-(carboxymethyl)uridine(34) in tRNA + S-adenosyl-L-methionine = 5-(2-methoxy-2-oxoethyl)uridine(34) in tRNA + S-adenosyl-L-homocysteine. Functionally, required for the methylation of the wobble bases at position 34 in tRNA. Appears to have a role in stress-response. This is tRNA (carboxymethyluridine(34)-5-O)-methyltransferase (TRM9) from Saccharomyces cerevisiae (strain ATCC 204508 / S288c) (Baker's yeast).